The following is a 345-amino-acid chain: MNRAQNAPQPSKLTRNLGLQGRNTFGFDASAELAYEITSAEQIPEVMESIAAQKLSWRVLGGGSNVILPKVLPGATLLMNITGAEITSSNQEHSLVAVGGGVNWHDFVLWSLDNDLPGLENLALIPGTVGAAPIQNIGAYGIEVADYIDSIEAFDAHTDSFVTLPKSACHFAYRDSYFKQHPHRFIVTKVVFKLPKQWQARIHYADLANQFAANATPCPEEIFLAVCKIRTRKLPDPKVIGNAGSFFQNPIVPNEQHETLLGKHPNLVSYPDAPGKRKLAAGWLIDQCGFKGERMGNVGVYENQALVLVNHGGGTAQDILGLAKCIQEKVRKEFGVSLEIEPNIL.

Residues 27-197 form the FAD-binding PCMH-type domain; it reads FDASAELAYE…TKVVFKLPKQ (171 aa). R174 is a catalytic residue. Residue S245 is the Proton donor of the active site. E341 is an active-site residue.

It belongs to the MurB family. FAD is required as a cofactor.

The protein localises to the cytoplasm. It carries out the reaction UDP-N-acetyl-alpha-D-muramate + NADP(+) = UDP-N-acetyl-3-O-(1-carboxyvinyl)-alpha-D-glucosamine + NADPH + H(+). The protein operates within cell wall biogenesis; peptidoglycan biosynthesis. In terms of biological role, cell wall formation. This Polynucleobacter asymbioticus (strain DSM 18221 / CIP 109841 / QLW-P1DMWA-1) (Polynucleobacter necessarius subsp. asymbioticus) protein is UDP-N-acetylenolpyruvoylglucosamine reductase.